We begin with the raw amino-acid sequence, 735 residues long: 1,4-alpha-glucan branching enzyme GlgB 1 (735 aa).

D418 functions as the Nucleophile in the catalytic mechanism. Catalysis depends on E471, which acts as the Proton donor.

This sequence belongs to the glycosyl hydrolase 13 family. GlgB subfamily. In terms of assembly, monomer.

The enzyme catalyses Transfers a segment of a (1-&gt;4)-alpha-D-glucan chain to a primary hydroxy group in a similar glucan chain.. It participates in glycan biosynthesis; glycogen biosynthesis. Functionally, catalyzes the formation of the alpha-1,6-glucosidic linkages in glycogen by scission of a 1,4-alpha-linked oligosaccharide from growing alpha-1,4-glucan chains and the subsequent attachment of the oligosaccharide to the alpha-1,6 position. This is 1,4-alpha-glucan branching enzyme GlgB 1 from Rhizobium etli (strain ATCC 51251 / DSM 11541 / JCM 21823 / NBRC 15573 / CFN 42).